A 65-amino-acid chain; its full sequence is TRKQPNCNVYRSHLFFCTRQMDPICGTNGKSYANPCIFCSEKGLRNQKFDFGHWGHCREYTSARS.

The Kazal-like domain maps to threonine 1–glutamate 59. 3 cysteine pairs are disulfide-bonded: cysteine 7/cysteine 39, cysteine 17/cysteine 36, and cysteine 25/cysteine 57. Serine 12 carries an O-linked (GalNAc...) serine glycan. The O-linked (GalNAc...) serine glycan is linked to serine 62.

The identity of the O-linked saccharides are not reported in Ref.1. The O-linked polysaccharides on Ser-12 and Ser-62 are probably the mucin type linked to GalNAc. Seminal plasma.

The protein localises to the secreted. Inhibits acrosin. In Sus scrofa (Pig), this protein is Seminal plasma acrosin inhibitor A1.